The primary structure comprises 310 residues: MEEKFKYSLRISWSYFLFLKQRIIHDRLTVSAGYMAYITLLSLVPLVTVLLSVLSQFPIFSGAGETVQEFVIQNFVPAASDAVEGSLKEFISNTGKMTAVGSGFLFVASVMLISAIDRSLNYIWRVKKKRRPMYSFSLYWMILTLGPLLVWASLAATSYVTSLNIMDDEIVSSFYRTLLGWLPIILSFSAFLGLYLLVPNKKIRVRHALVGAMSAGCLFEVSKVGFAQYITQFPSYEVIYGALAAVPILFVWIYLCWIIVLIGAEITASLGESDQWLIDKINTHVFDAENTVLTESKGLTESDSTDPKSK.

Transmembrane regions (helical) follow at residues 34-54 (YMAYITLLSLVPLVTVLLSVL), 97-117 (MTAVGSGFLFVASVMLISAID), 136-156 (FSLYWMILTLGPLLVWASLAA), 178-198 (LLGWLPIILSFSAFLGLYLLV), 207-227 (HALVGAMSAGCLFEVSKVGFA), and 242-262 (ALAAVPILFVWIYLCWIIVLI).

The protein belongs to the UPF0761 family.

Its subcellular location is the cell inner membrane. In Aliivibrio salmonicida (strain LFI1238) (Vibrio salmonicida (strain LFI1238)), this protein is UPF0761 membrane protein VSAL_I2938.